Consider the following 180-residue polypeptide: ATP synthase subunit b 2 (180 aa).

The helical transmembrane segment at 33–53 threads the bilayer; sequence IFWLLVTLVAIYFLLTRVALP.

This sequence belongs to the ATPase B chain family. In terms of assembly, F-type ATPases have 2 components, F(1) - the catalytic core - and F(0) - the membrane proton channel. F(1) has five subunits: alpha(3), beta(3), gamma(1), delta(1), epsilon(1). F(0) has three main subunits: a(1), b(2) and c(10-14). The alpha and beta chains form an alternating ring which encloses part of the gamma chain. F(1) is attached to F(0) by a central stalk formed by the gamma and epsilon chains, while a peripheral stalk is formed by the delta and b chains.

It localises to the cell inner membrane. Its function is as follows. F(1)F(0) ATP synthase produces ATP from ADP in the presence of a proton or sodium gradient. F-type ATPases consist of two structural domains, F(1) containing the extramembraneous catalytic core and F(0) containing the membrane proton channel, linked together by a central stalk and a peripheral stalk. During catalysis, ATP synthesis in the catalytic domain of F(1) is coupled via a rotary mechanism of the central stalk subunits to proton translocation. Component of the F(0) channel, it forms part of the peripheral stalk, linking F(1) to F(0). The b'-subunit is a diverged and duplicated form of b found in plants and photosynthetic bacteria. In Cereibacter sphaeroides (strain ATCC 17029 / ATH 2.4.9) (Rhodobacter sphaeroides), this protein is ATP synthase subunit b 2 (atpF2).